Consider the following 458-residue polypeptide: COBRA-like protein 2 (458 aa).

Positions 1–29 (MARFLLGAAAIALLAGVSSLLLMVPFAEA) are cleaved as a signal peptide. Asparagine 38, asparagine 163, asparagine 171, asparagine 211, asparagine 236, asparagine 318, asparagine 333, and asparagine 352 each carry an N-linked (GlcNAc...) asparagine glycan. A helical membrane pass occupies residues 430-450 (VFLLMSFLVCGTLAFLHNHLV).

This sequence belongs to the COBRA family.

The protein resides in the membrane. The sequence is that of COBRA-like protein 2 (BC1L2) from Oryza sativa subsp. japonica (Rice).